The chain runs to 356 residues: Methylthioribose-1-phosphate isomerase (356 aa).

The active-site Proton donor is the D234.

Belongs to the eIF-2B alpha/beta/delta subunits family. MtnA subfamily.

It localises to the cytoplasm. It is found in the nucleus. The enzyme catalyses 5-(methylsulfanyl)-alpha-D-ribose 1-phosphate = 5-(methylsulfanyl)-D-ribulose 1-phosphate. The protein operates within amino-acid biosynthesis; L-methionine biosynthesis via salvage pathway; L-methionine from S-methyl-5-thio-alpha-D-ribose 1-phosphate: step 1/6. Catalyzes the interconversion of methylthioribose-1-phosphate (MTR-1-P) into methylthioribulose-1-phosphate (MTRu-1-P). In Schizosaccharomyces japonicus (strain yFS275 / FY16936) (Fission yeast), this protein is Methylthioribose-1-phosphate isomerase (mri1).